We begin with the raw amino-acid sequence, 756 residues long: Cilium assembly protein DZIP1L (756 aa).

A disordered region spans residues 1 to 20; sequence MLGQFSPGEPYTTSLSSTPP. Residues 10-19 show a composition bias toward low complexity; it reads PYTTSLSSTP. Residues 108 to 158 are a coiled coil; sequence DFLSSQLAGLEERLQAATSLVQQGEGQRAELEKSLQETKQENRRRKQLIAT. The segment at 171–194 adopts a C2H2-type zinc-finger fold; sequence HKCQFCEKSFVNYSYLQAHVQRRH. Basic and acidic residues-rich tracts occupy residues 193-202, 237-262, 319-335, and 344-365; these read RHPEVTDAEK, NLRRQQEQEQQRRREQSEKEALERWK, DPEKEMRENRERELRER, and RRKFQEAQKRHQQENKELKSEN. Disordered stretches follow at residues 193-212, 233-262, 310-365, 409-466, 531-626, and 693-756; these read RHPEVTDAEKQKKRKVEEME, QQADNLRRQQEQEQQRRREQSEKEALERWK, NNAS…KSEN, KIKK…MRES, VKSL…AYIT, and IKTP…GTSA. 2 coiled-coil regions span residues 196-283 and 321-416; these read EVTD…FLQE and EKEM…LSAT. Polar residues predominate over residues 534 to 558; it reads LQKSSGKPTPNTLKQRGKKTSTPLN. A compositionally biased stretch (basic and acidic residues) spans 560–578; the sequence is KSLRFRQDSKASDRREKSQ. A compositionally biased stretch (pro residues) spans 586-598; it reads TPTPRSKAPPPNQ.

Belongs to the DZIP C2H2-type zinc-finger protein family.

The protein localises to the cytoplasm. Its subcellular location is the cytoskeleton. It localises to the cilium basal body. It is found in the microtubule organizing center. The protein resides in the centrosome. The protein localises to the centriole. Involved in primary cilium formation. Probably acts as a transition zone protein required for localization of PKD1/PC1 and PKD2/PC2 to the ciliary membrane. This chain is Cilium assembly protein DZIP1L (dzip1l), found in Danio rerio (Zebrafish).